Reading from the N-terminus, the 212-residue chain is uncharacterized protein (212 aa).

One can recognise a Toprim domain in the interval 105–187 (NTIYLVEGDF…QVKVVQLKGK (83 aa)).

This is an uncharacterized protein from Mycoplasma pneumoniae (strain ATCC 29342 / M129 / Subtype 1) (Mycoplasmoides pneumoniae).